Consider the following 496-residue polypeptide: Probable cytosol aminopeptidase (496 aa).

Mn(2+)-binding residues include K258 and D263. The active site involves K270. Mn(2+) is bound by residues D281, D340, and E342. R344 is a catalytic residue.

It belongs to the peptidase M17 family. The cofactor is Mn(2+).

It localises to the cytoplasm. The enzyme catalyses Release of an N-terminal amino acid, Xaa-|-Yaa-, in which Xaa is preferably Leu, but may be other amino acids including Pro although not Arg or Lys, and Yaa may be Pro. Amino acid amides and methyl esters are also readily hydrolyzed, but rates on arylamides are exceedingly low.. The catalysed reaction is Release of an N-terminal amino acid, preferentially leucine, but not glutamic or aspartic acids.. Its function is as follows. Presumably involved in the processing and regular turnover of intracellular proteins. Catalyzes the removal of unsubstituted N-terminal amino acids from various peptides. The sequence is that of Probable cytosol aminopeptidase from Helicobacter pylori (strain G27).